Here is a 428-residue protein sequence, read N- to C-terminus: Histone-lysine N-methyltransferase SMYD3 (428 aa).

Met1 is subject to N-acetylmethionine. In terms of domain architecture, SET spans 4–240 (LKVEKFATAK…VGEELTICYL (237 aa)). Residue 14–16 (RGN) participates in S-adenosyl-L-methionine binding. Thr22 carries the post-translational modification Phosphothreonine. Positions 49, 52, 62, 65, 71, 75, 83, and 87 each coordinate Zn(2+). The MYND-type zinc finger occupies 49–87 (CDRCLLGKEKLMRCSQCRVAKYCSAKCQKKAWPDHKREC). Residues Tyr124, Asn132, Asn181, 205-206 (NH), Tyr239, and Phe259 each bind S-adenosyl-L-methionine. The tract at residues 272–428 (DADMLTGDEQ…EECDANIRAS (157 aa)) is C-terminal domain; essential for histone methyltransferase activity, nuclear localization and mediates interaction with HSP90AA1.

Belongs to the class V-like SAM-binding methyltransferase superfamily. Histone-lysine methyltransferase family. In terms of assembly, interacts with HSPCA. Interacts with HELZ. Interacts with POLR2A; the interaction may be indirect and may be mediated by HELZ. Interacts with HSP90AA1; this interaction enhances SMYD3 histone-lysine N-methyltransferase. As to expression, expressed in skeletal muscles and testis. Overexpressed in a majority of colorectal and hepatocellular carcinomas.

The protein localises to the cytoplasm. It is found in the nucleus. It catalyses the reaction L-lysyl(4)-[histone H3] + 3 S-adenosyl-L-methionine = N(6),N(6),N(6)-trimethyl-L-lysyl(4)-[histone H3] + 3 S-adenosyl-L-homocysteine + 3 H(+). Histone methyltransferase activity strongly stimulated by HSPCA. Functionally, histone methyltransferase. Specifically methylates 'Lys-4' of histone H3, inducing di- and tri-methylation, but not monomethylation. Also methylates 'Lys-5' of histone H4. Plays an important role in transcriptional activation as a member of an RNA polymerase complex. Binds DNA containing 5'-CCCTCC-3' or 5'-GAGGGG-3' sequences. The chain is Histone-lysine N-methyltransferase SMYD3 (SMYD3) from Homo sapiens (Human).